The primary structure comprises 173 residues: MNNNGFSTGEEDSRGPADQVCCLLDDGDRCRNQAGNASYSKRIQKTVTQRRLKLSIDTAARHIYICDFHKGRIQCARTKRRRRDSEDDSNETDTDLPEVDLYQLQVNTLRRYKRFYKVSTRPGINKAQLSETIMKHFKTIPIKEKEILTYFIYMVKSNSNKLDQKNNTSNEAT.

The Atypical zinc finger occupies 21-69; that stretch reads CCLLDDGDRCRNQAGNASYSKRIQKTVTQRRLKLSIDTAARHIYICDFH.

The protein belongs to the SAP30 family. In terms of assembly, component of the class 1 Sin3-histone deacetylase complex (HDAC).

The protein resides in the nucleus. Its function is as follows. Required for the function of the class 1 Sin3-histone deacetylase complex (HDAC). The polypeptide is Histone deacetylase complex subunit SAP30 homolog (Aedes aegypti (Yellowfever mosquito)).